The primary structure comprises 462 residues: Asparagine--tRNA ligase (462 aa).

This sequence belongs to the class-II aminoacyl-tRNA synthetase family. Homodimer.

It is found in the cytoplasm. The catalysed reaction is tRNA(Asn) + L-asparagine + ATP = L-asparaginyl-tRNA(Asn) + AMP + diphosphate + H(+). This is Asparagine--tRNA ligase from Borreliella burgdorferi (strain ATCC 35210 / DSM 4680 / CIP 102532 / B31) (Borrelia burgdorferi).